The sequence spans 426 residues: Serine--tRNA ligase (426 aa).

233–235 provides a ligand contact to L-serine; that stretch reads TAE. 264–266 contributes to the ATP binding site; the sequence is RAE. Residue Glu287 coordinates L-serine. Position 351–354 (351–354) interacts with ATP; sequence EISS. An L-serine-binding site is contributed by Ser387.

Belongs to the class-II aminoacyl-tRNA synthetase family. Type-1 seryl-tRNA synthetase subfamily. In terms of assembly, homodimer. The tRNA molecule binds across the dimer.

The protein resides in the cytoplasm. It carries out the reaction tRNA(Ser) + L-serine + ATP = L-seryl-tRNA(Ser) + AMP + diphosphate + H(+). The enzyme catalyses tRNA(Sec) + L-serine + ATP = L-seryl-tRNA(Sec) + AMP + diphosphate + H(+). It participates in aminoacyl-tRNA biosynthesis; selenocysteinyl-tRNA(Sec) biosynthesis; L-seryl-tRNA(Sec) from L-serine and tRNA(Sec): step 1/1. In terms of biological role, catalyzes the attachment of serine to tRNA(Ser). Is also able to aminoacylate tRNA(Sec) with serine, to form the misacylated tRNA L-seryl-tRNA(Sec), which will be further converted into selenocysteinyl-tRNA(Sec). This Clostridium novyi (strain NT) protein is Serine--tRNA ligase.